The sequence spans 158 residues: Cyclic pyranopterin monophosphate synthase (158 aa).

Substrate-binding positions include 75–77 (LCH) and 113–114 (ME). The active site involves aspartate 128.

Belongs to the MoaC family. As to quaternary structure, homohexamer; trimer of dimers.

The catalysed reaction is (8S)-3',8-cyclo-7,8-dihydroguanosine 5'-triphosphate = cyclic pyranopterin phosphate + diphosphate. Its pathway is cofactor biosynthesis; molybdopterin biosynthesis. Functionally, catalyzes the conversion of (8S)-3',8-cyclo-7,8-dihydroguanosine 5'-triphosphate to cyclic pyranopterin monophosphate (cPMP). The sequence is that of Cyclic pyranopterin monophosphate synthase from Paraburkholderia phytofirmans (strain DSM 17436 / LMG 22146 / PsJN) (Burkholderia phytofirmans).